The primary structure comprises 354 residues: Peptide chain release factor 1 (354 aa).

Gln-230 is subject to N5-methylglutamine.

It belongs to the prokaryotic/mitochondrial release factor family. In terms of processing, methylated by PrmC. Methylation increases the termination efficiency of RF1.

It is found in the cytoplasm. Functionally, peptide chain release factor 1 directs the termination of translation in response to the peptide chain termination codons UAG and UAA. This Pelobacter propionicus (strain DSM 2379 / NBRC 103807 / OttBd1) protein is Peptide chain release factor 1.